A 124-amino-acid chain; its full sequence is Large ribosomal subunit protein uL29 (124 aa).

It belongs to the universal ribosomal protein uL29 family.

The sequence is that of Large ribosomal subunit protein uL29 (RPL35) from Tetrahymena thermophila (strain SB210).